A 473-amino-acid polypeptide reads, in one-letter code: Glutamyl-tRNA reductase (473 aa).

Substrate contacts are provided by residues 49–52, serine 109, 114–116, and glutamine 120; these read TCNR and EHQ. Cysteine 50 serves as the catalytic Nucleophile. NADP(+) is bound at residue 189–194; sequence GAGAMA. The interval 422–473 is disordered; sequence VAISAPQPSTDSPARAAYQPTDEAATDAEPRRDDAEPPSAAAAQDAGRESRP.

The protein belongs to the glutamyl-tRNA reductase family. In terms of assembly, homodimer.

It carries out the reaction (S)-4-amino-5-oxopentanoate + tRNA(Glu) + NADP(+) = L-glutamyl-tRNA(Glu) + NADPH + H(+). Its pathway is porphyrin-containing compound metabolism; protoporphyrin-IX biosynthesis; 5-aminolevulinate from L-glutamyl-tRNA(Glu): step 1/2. Its function is as follows. Catalyzes the NADPH-dependent reduction of glutamyl-tRNA(Glu) to glutamate 1-semialdehyde (GSA). The protein is Glutamyl-tRNA reductase of Acidothermus cellulolyticus (strain ATCC 43068 / DSM 8971 / 11B).